Here is a 770-residue protein sequence, read N- to C-terminus: Jhy protein (770 aa).

Disordered regions lie at residues Met1–Tyr249, Thr295–Ser438, His493–Glu527, Glu595–Val647, and Asp708–Gly740. The span at Ser57–Glu71 shows a compositional bias: basic and acidic residues. The span at Pro72 to Glu85 shows a compositional bias: acidic residues. A compositionally biased stretch (basic and acidic residues) spans His112–Gly134. Low complexity predominate over residues Ser218 to Ser229. Positions Thr295–His314 are enriched in basic and acidic residues. Residues Arg340–Arg354 show a composition bias toward polar residues. Basic residues predominate over residues Arg355 to Gly370. Positions Gln383 to Gln398 are enriched in low complexity. Over residues Ala410 to Ser438 the composition is skewed to polar residues. Basic and acidic residues predominate over residues His493–Met509. Composition is skewed to basic residues over residues Asn510–Ala521 and Gly625–Tyr642.

Expressed in the brain, specifically in hypothalamus, pineal gland, and ependymal cells of the aqueduct of Sylvius, as well as in the choroid plexus of the third ventricle. Expressed in the ependymal cells lining the lateral ventricles (at protein level).

Functionally, required for the normal development of cilia in brain ependymal cells lining the ventricular surfaces. In Mus musculus (Mouse), this protein is Jhy protein.